The sequence spans 425 residues: UDP-N-acetylglucosamine 1-carboxyvinyltransferase (425 aa).

Residue 22–23 (KN) participates in phosphoenolpyruvate binding. Arginine 93 is a UDP-N-acetyl-alpha-D-glucosamine binding site. Aspartate 117 acts as the Proton donor in catalysis. UDP-N-acetyl-alpha-D-glucosamine-binding residues include aspartate 312 and methionine 334.

The protein belongs to the EPSP synthase family. MurA subfamily.

The protein localises to the cytoplasm. It catalyses the reaction phosphoenolpyruvate + UDP-N-acetyl-alpha-D-glucosamine = UDP-N-acetyl-3-O-(1-carboxyvinyl)-alpha-D-glucosamine + phosphate. The protein operates within cell wall biogenesis; peptidoglycan biosynthesis. In terms of biological role, cell wall formation. Adds enolpyruvyl to UDP-N-acetylglucosamine. This Treponema pallidum (strain Nichols) protein is UDP-N-acetylglucosamine 1-carboxyvinyltransferase.